The chain runs to 68 residues: Antimicrobial peptide VpCT3 (68 aa).

The N-terminal stretch at 1 to 23 is a signal peptide; sequence MKTQIVILIVAVLVLQLVSQSDA. Leucine amide is present on L36. The propeptide occupies 37–68; that stretch reads GKRGLKNLDQYNDLFDGEISDADIKFLQDLMR.

It belongs to the non-disulfide-bridged peptide (NDBP) superfamily. Short antimicrobial peptide (group 4) family. Expressed by the venom gland.

Its subcellular location is the secreted. The protein resides in the target cell membrane. Functionally, antimicrobial peptide with weak activity against all bacteria tested (MIC&gt;100 uM) and all yeasts tested (MIC&gt;200 uM). Also provokes weak hemolysis on human erythrocytes (HC(50)=83.7 uM). The sequence is that of Antimicrobial peptide VpCT3 from Mesomexovis punctatus (Scorpion).